Reading from the N-terminus, the 338-residue chain is Holliday junction branch migration complex subunit RuvB (338 aa).

A large ATPase domain (RuvB-L) region spans residues 1 to 181; sequence MEERILTQNF…FGVINRLDYY (181 aa). Residues leucine 20, arginine 21, glycine 62, lysine 65, threonine 66, threonine 67, 128-130, arginine 171, tyrosine 181, and arginine 218 each bind ATP; that span reads EDF. Threonine 66 is a binding site for Mg(2+). The small ATPAse domain (RuvB-S) stretch occupies residues 182-252; that stretch reads SVEELKEIIK…TANIALNMLG (71 aa). A head domain (RuvB-H) region spans residues 255–338; it reads EMGLEEIDRK…YVEQRRIEDV (84 aa). Residues arginine 310 and arginine 315 each contribute to the DNA site.

The protein belongs to the RuvB family. As to quaternary structure, homohexamer. Forms an RuvA(8)-RuvB(12)-Holliday junction (HJ) complex. HJ DNA is sandwiched between 2 RuvA tetramers; dsDNA enters through RuvA and exits via RuvB. An RuvB hexamer assembles on each DNA strand where it exits the tetramer. Each RuvB hexamer is contacted by two RuvA subunits (via domain III) on 2 adjacent RuvB subunits; this complex drives branch migration. In the full resolvosome a probable DNA-RuvA(4)-RuvB(12)-RuvC(2) complex forms which resolves the HJ.

It is found in the cytoplasm. The enzyme catalyses ATP + H2O = ADP + phosphate + H(+). The RuvA-RuvB-RuvC complex processes Holliday junction (HJ) DNA during genetic recombination and DNA repair, while the RuvA-RuvB complex plays an important role in the rescue of blocked DNA replication forks via replication fork reversal (RFR). RuvA specifically binds to HJ cruciform DNA, conferring on it an open structure. The RuvB hexamer acts as an ATP-dependent pump, pulling dsDNA into and through the RuvAB complex. RuvB forms 2 homohexamers on either side of HJ DNA bound by 1 or 2 RuvA tetramers; 4 subunits per hexamer contact DNA at a time. Coordinated motions by a converter formed by DNA-disengaged RuvB subunits stimulates ATP hydrolysis and nucleotide exchange. Immobilization of the converter enables RuvB to convert the ATP-contained energy into a lever motion, pulling 2 nucleotides of DNA out of the RuvA tetramer per ATP hydrolyzed, thus driving DNA branch migration. The RuvB motors rotate together with the DNA substrate, which together with the progressing nucleotide cycle form the mechanistic basis for DNA recombination by continuous HJ branch migration. Branch migration allows RuvC to scan DNA until it finds its consensus sequence, where it cleaves and resolves cruciform DNA. This Caldanaerobacter subterraneus subsp. tengcongensis (strain DSM 15242 / JCM 11007 / NBRC 100824 / MB4) (Thermoanaerobacter tengcongensis) protein is Holliday junction branch migration complex subunit RuvB.